A 341-amino-acid polypeptide reads, in one-letter code: Cell wall mannoprotein PIR1 (341 aa).

The signal sequence occupies residues 1–18; it reads MQYKKSLVASALVTTSLA. Positions 19–63 are excised as a propeptide; it reads AYAPKDPWSTLTPSATYKGGITDYSSTFGIAVEPIATTASSKAKR. PIR1/2/3 repeat units lie at residues 64 to 82, 83 to 101, 102 to 120, 126 to 144, 145 to 163, 164 to 182, 183 to 201, and 202 to 220; these read AAAISQIGDGQIQATTKTT, AAAVSQIGDGQIQATTKTK, AAAVSQIGDGQIQATTKTT, AAAVSQIGDGQIQATTNTT, and VAPVSQITDGQIQATTLTS.

The protein belongs to the PIR protein family. Post-translationally, covalently linked to beta-1,3-glucan of the inner cell wall layer via an alkali-sensitive ester linkage between the gamma-carboxyl group of glutamic acids, arising from specific glutamines within the PIR1/2/3 repeats, and hydroxyl groups of glucoses of beta-1,3-glucan chains. O-glycosylated. Extensively O-mannosylated.

The protein resides in the secreted. It is found in the cell wall. In terms of biological role, component of the outer cell wall layer. Required for stability of the cell wall and for optimal growth. Required for resistance against several antifungal and cell wall-perturbing agents and for tolerance to heat shock. This Saccharomyces cerevisiae (strain RM11-1a) (Baker's yeast) protein is Cell wall mannoprotein PIR1 (PIR1).